Here is a 104-residue protein sequence, read N- to C-terminus: MAIVKVTDADFDSKVESGVQLVDFWATWCGPCKMIAPVLEELAADYEGKADILKLDVDENPSTAAKYEVMSIPTLIVFKDGQPVDKVVGFQPKENLAEVLDKHL.

Positions alanine 2–leucine 104 constitute a Thioredoxin domain. A disulfide bridge links cysteine 29 with cysteine 32.

Belongs to the thioredoxin family.

In terms of biological role, component of the thioredoxin-thioredoxin reductase system. Participates in various redox reactions through the reversible oxidation of its active center dithiol to a disulfide and catalyzes dithiol-disulfide exchange reactions. The protein is Thioredoxin (trxA) of Staphylococcus aureus (strain N315).